We begin with the raw amino-acid sequence, 269 residues long: 4-hydroxy-tetrahydrodipicolinate reductase (269 aa).

NAD(+)-binding positions include 10–15 and Glu-36; that span reads GSSGRM. Arg-37 provides a ligand contact to NADP(+). NAD(+) is bound by residues 99–101 and 123–126; these read GTT and APNM. Catalysis depends on His-156, which acts as the Proton donor/acceptor. His-157 serves as a coordination point for (S)-2,3,4,5-tetrahydrodipicolinate. The active-site Proton donor is the Lys-160. 166-167 lines the (S)-2,3,4,5-tetrahydrodipicolinate pocket; sequence GT.

It belongs to the DapB family.

It is found in the cytoplasm. The catalysed reaction is (S)-2,3,4,5-tetrahydrodipicolinate + NAD(+) + H2O = (2S,4S)-4-hydroxy-2,3,4,5-tetrahydrodipicolinate + NADH + H(+). It catalyses the reaction (S)-2,3,4,5-tetrahydrodipicolinate + NADP(+) + H2O = (2S,4S)-4-hydroxy-2,3,4,5-tetrahydrodipicolinate + NADPH + H(+). Its pathway is amino-acid biosynthesis; L-lysine biosynthesis via DAP pathway; (S)-tetrahydrodipicolinate from L-aspartate: step 4/4. In terms of biological role, catalyzes the conversion of 4-hydroxy-tetrahydrodipicolinate (HTPA) to tetrahydrodipicolinate. This is 4-hydroxy-tetrahydrodipicolinate reductase from Nitrosospira multiformis (strain ATCC 25196 / NCIMB 11849 / C 71).